A 1561-amino-acid polypeptide reads, in one-letter code: ABC-type transporter phomO' (1561 aa).

7 consecutive transmembrane segments (helical) span residues 34 to 54 (LYFE…LLAA), 110 to 130 (CTAG…CTTV), 139 to 159 (SVPA…LAHF), 172 to 192 (SSSL…APLV), 202 to 222 (GSAL…LIAV), 314 to 334 (LGLY…FTLA), and 358 to 378 (GLIG…GWYW). The ABC transmembrane type-1 1 domain maps to 326–599 (LCLAGFTLAQ…LLQIIPSFGA (274 aa)). Asn-384 carries N-linked (GlcNAc...) asparagine glycosylation. The next 4 helical transmembrane spans lie at 428 to 448 (LAYA…TWML), 452 to 472 (VGPP…TSTY), 535 to 555 (LIVG…VLVF), and 577 to 597 (LIWI…IPSF). The region spanning 645-871 (IHNSSFSYTD…VEDENGDVDN (227 aa)) is the ABC transporter 1 domain. The N-linked (GlcNAc...) asparagine glycan is linked to Asn-647. 678 to 685 (GPAGCGKS) is an ATP binding site. Asn-721 is a glycosylation site (N-linked (GlcNAc...) asparagine). The interval 853 to 899 (YQFPPSQADVEDENGDVDNGAENTRPRESSHTTEAQSGPPEPKSKPT) is disordered. Helical transmembrane passes span 913–933 (SIGF…AFCL), 969–989 (VLPL…IVPL), 1037–1054 (LFNT…VILI), and 1147–1167 (LVLN…AVGL). Positions 920 to 1209 (VLFIGGGIIF…LLTAWTSLET (290 aa)) constitute an ABC transmembrane type-1 2 domain. An N-linked (GlcNAc...) asparagine glycan is attached at Asn-1189. Residues 1229 to 1238 (DVLVRPDSLD) are compositionally biased toward basic and acidic residues. The interval 1229–1298 (DVLVRPDSLD…DVAADGEKHE (70 aa)) is disordered. A compositionally biased stretch (acidic residues) spans 1269 to 1280 (YDDDDESDENTD). Residues 1297 to 1545 (HEATTITTTS…SDIFAFFGRS (249 aa)) enclose the ABC transporter 2 domain. An ATP-binding site is contributed by 1333 to 1340 (GRTGSGKS). A glycan (N-linked (GlcNAc...) asparagine) is linked at Asn-1496.

Belongs to the ABC transporter superfamily. ABCC family. Conjugate transporter (TC 3.A.1.208) subfamily.

Its subcellular location is the membrane. Functionally, ABC-type transporter; part of the gene cluster that mediates the biosynthesis of the phomopsins, a group of hexapeptide mycotoxins which infects lupins and causes lupinosis disease in livestock. This is ABC-type transporter phomO' from Diaporthe leptostromiformis (Lupinosis disease fungus).